Here is a 397-residue protein sequence, read N- to C-terminus: Succinate--CoA ligase [ADP-forming] subunit beta (397 aa).

The ATP-grasp domain maps to 9 to 254 (KALLKGYGAP…ETEEDAKEIE (246 aa)). ATP contacts are provided by residues Lys-46, 53-55 (GRG), Glu-109, Ala-112, and Glu-117. Mg(2+) is bound by residues Asn-209 and Asp-223. Residues Asn-274 and 331 to 333 (GIM) contribute to the substrate site.

Belongs to the succinate/malate CoA ligase beta subunit family. In terms of assembly, heterotetramer of two alpha and two beta subunits. Mg(2+) is required as a cofactor.

It carries out the reaction succinate + ATP + CoA = succinyl-CoA + ADP + phosphate. It catalyses the reaction GTP + succinate + CoA = succinyl-CoA + GDP + phosphate. Its pathway is carbohydrate metabolism; tricarboxylic acid cycle; succinate from succinyl-CoA (ligase route): step 1/1. In terms of biological role, succinyl-CoA synthetase functions in the citric acid cycle (TCA), coupling the hydrolysis of succinyl-CoA to the synthesis of either ATP or GTP and thus represents the only step of substrate-level phosphorylation in the TCA. The beta subunit provides nucleotide specificity of the enzyme and binds the substrate succinate, while the binding sites for coenzyme A and phosphate are found in the alpha subunit. The polypeptide is Succinate--CoA ligase [ADP-forming] subunit beta (Rhizobium etli (strain ATCC 51251 / DSM 11541 / JCM 21823 / NBRC 15573 / CFN 42)).